The sequence spans 111 residues: Ribosome-binding factor A (111 aa).

It belongs to the RbfA family. Monomer. Binds 30S ribosomal subunits, but not 50S ribosomal subunits or 70S ribosomes.

Its subcellular location is the cytoplasm. One of several proteins that assist in the late maturation steps of the functional core of the 30S ribosomal subunit. Associates with free 30S ribosomal subunits (but not with 30S subunits that are part of 70S ribosomes or polysomes). Required for efficient processing of 16S rRNA. May interact with the 5'-terminal helix region of 16S rRNA. The polypeptide is Ribosome-binding factor A (Helicobacter pylori (strain J99 / ATCC 700824) (Campylobacter pylori J99)).